A 208-amino-acid chain; its full sequence is NADH-quinone oxidoreductase subunit I 2 (208 aa).

2 4Fe-4S ferredoxin-type domains span residues 79–109 (ILVE…IEGK) and 119–148 (SVFN…QTDI). Residues Cys88, Cys91, Cys94, Cys98, Cys128, Cys131, Cys134, and Cys138 each contribute to the [4Fe-4S] cluster site.

It belongs to the complex I 23 kDa subunit family. NDH-1 is composed of 14 different subunits. Subunits NuoA, H, J, K, L, M, N constitute the membrane sector of the complex. [4Fe-4S] cluster serves as cofactor.

It is found in the cell inner membrane. The enzyme catalyses a quinone + NADH + 5 H(+)(in) = a quinol + NAD(+) + 4 H(+)(out). In terms of biological role, NDH-1 shuttles electrons from NADH, via FMN and iron-sulfur (Fe-S) centers, to quinones in the respiratory chain. The immediate electron acceptor for the enzyme in this species is believed to be ubiquinone. Couples the redox reaction to proton translocation (for every two electrons transferred, four hydrogen ions are translocated across the cytoplasmic membrane), and thus conserves the redox energy in a proton gradient. In Aquifex aeolicus (strain VF5), this protein is NADH-quinone oxidoreductase subunit I 2.